The primary structure comprises 188 residues: ATP synthase subunit delta (188 aa).

The protein belongs to the ATPase delta chain family. F-type ATPases have 2 components, F(1) - the catalytic core - and F(0) - the membrane proton channel. F(1) has five subunits: alpha(3), beta(3), gamma(1), delta(1), epsilon(1). F(0) has three main subunits: a(1), b(2) and c(10-14). The alpha and beta chains form an alternating ring which encloses part of the gamma chain. F(1) is attached to F(0) by a central stalk formed by the gamma and epsilon chains, while a peripheral stalk is formed by the delta and b chains.

It localises to the cell membrane. Functionally, f(1)F(0) ATP synthase produces ATP from ADP in the presence of a proton or sodium gradient. F-type ATPases consist of two structural domains, F(1) containing the extramembraneous catalytic core and F(0) containing the membrane proton channel, linked together by a central stalk and a peripheral stalk. During catalysis, ATP synthesis in the catalytic domain of F(1) is coupled via a rotary mechanism of the central stalk subunits to proton translocation. In terms of biological role, this protein is part of the stalk that links CF(0) to CF(1). It either transmits conformational changes from CF(0) to CF(1) or is implicated in proton conduction. The polypeptide is ATP synthase subunit delta (Lawsonia intracellularis (strain PHE/MN1-00)).